Consider the following 575-residue polypeptide: Adenine deaminase (575 aa).

This sequence belongs to the metallo-dependent hydrolases superfamily. Adenine deaminase family. Mn(2+) is required as a cofactor.

The enzyme catalyses adenine + H2O + H(+) = hypoxanthine + NH4(+). The polypeptide is Adenine deaminase (Nitratidesulfovibrio vulgaris (strain ATCC 29579 / DSM 644 / CCUG 34227 / NCIMB 8303 / VKM B-1760 / Hildenborough) (Desulfovibrio vulgaris)).